A 460-amino-acid chain; its full sequence is ATP synthase subunit beta (460 aa).

An ATP-binding site is contributed by 150–157 (GGAGVGKT).

It belongs to the ATPase alpha/beta chains family. As to quaternary structure, F-type ATPases have 2 components, CF(1) - the catalytic core - and CF(0) - the membrane proton channel. CF(1) has five subunits: alpha(3), beta(3), gamma(1), delta(1), epsilon(1). CF(0) has three main subunits: a(1), b(2) and c(9-12). The alpha and beta chains form an alternating ring which encloses part of the gamma chain. CF(1) is attached to CF(0) by a central stalk formed by the gamma and epsilon chains, while a peripheral stalk is formed by the delta and b chains.

The protein resides in the cell inner membrane. The enzyme catalyses ATP + H2O + 4 H(+)(in) = ADP + phosphate + 5 H(+)(out). Its function is as follows. Produces ATP from ADP in the presence of a proton gradient across the membrane. The catalytic sites are hosted primarily by the beta subunits. The protein is ATP synthase subunit beta of Salmonella agona (strain SL483).